A 472-amino-acid polypeptide reads, in one-letter code: Serine/threonine-protein phosphatase T (472 aa).

TPR repeat units lie at residues 7–40, 41–73, and 74–107; these read ADKL…TKTP, TLFC…EPTF, and AKAY…APQN. Mn(2+) is bound by residues Asp-217, His-219, Asp-246, and Asn-278. His-279 functions as the Proton donor/acceptor in the catalytic mechanism. The Mn(2+) site is built by His-327 and His-403.

This sequence belongs to the PPP phosphatase family. PP-5 (PP-T) subfamily. Mg(2+) is required as a cofactor. The cofactor is Mn(2+).

The protein resides in the cytoplasm. It localises to the cytosol. Its subcellular location is the nucleus. It carries out the reaction O-phospho-L-seryl-[protein] + H2O = L-seryl-[protein] + phosphate. It catalyses the reaction O-phospho-L-threonyl-[protein] + H2O = L-threonyl-[protein] + phosphate. With respect to regulation, activated by arachidonic acid. Functionally, may function as a protein phosphatase. This Trypanosoma brucei brucei (strain 927/4 GUTat10.1) protein is Serine/threonine-protein phosphatase T.